Reading from the N-terminus, the 332-residue chain is MKTLGEFIVEKQHEFSQATGELTALLSAIKLGAKIIHRDINKAGLVDILGASGAENAQGEVQQKLDLFANEKLKAALKARDIVAGIASEEEDEIVVFEGCEHAKYVVLMDPLDGSSNIDVNVSVGTIFSIYRRVTPVGTPVTEEDFLQPGNKQVAAGYVVYGSSTMLVYTTGCGVHAFTYDPSLGVFCLCQERMRFPEKGKTYSINEGNYIKFPNGVKKYIKFCQEEDSSTSRPYTSRYIGSLVADFHRNLLKGGIYLYPSTASHPKGKLRLLYECNPMAFLAEQAGGKASDGKERILDIIPESLHQRRSFFVGNRHMVDDVERFIREYPDA.

Mg(2+) is bound by residues E89, D110, L112, and D113. Residues 113-116 (DGSS), N206, Y239, 257-259 (YLY), and K269 each bind substrate. Residue E275 participates in Mg(2+) binding.

This sequence belongs to the FBPase class 1 family. Homotetramer. Mg(2+) serves as cofactor.

It localises to the cytoplasm. The enzyme catalyses beta-D-fructose 1,6-bisphosphate + H2O = beta-D-fructose 6-phosphate + phosphate. The protein operates within carbohydrate biosynthesis; gluconeogenesis. This is Fructose-1,6-bisphosphatase class 1 from Salmonella gallinarum (strain 287/91 / NCTC 13346).